Consider the following 184-residue polypeptide: Non-fimbrial adhesin 1 (184 aa).

The N-terminal stretch at 1-28 (MKAKKYENQIYNENGRRCQRHGRRLAIA) is a signal peptide. Cysteines 57 and 91 form a disulfide.

Forms a polymeric structure, which disintegrates with elevated temperature into a monomer but with some relatively stable dimers.

The sequence is that of Non-fimbrial adhesin 1 (nfaA) from Escherichia coli.